Here is a 376-residue protein sequence, read N- to C-terminus: Queuine tRNA-ribosyltransferase (376 aa).

Residue Asp93 is the Proton acceptor of the active site. Residues 93-97, Asp147, Gln191, and Gly218 contribute to the substrate site; that span reads DSGGF. Residues 249–255 form an RNA binding region; sequence GVGKPED. Asp268 (nucleophile) is an active-site residue. Residues 273 to 277 form an RNA binding; important for wobble base 34 recognition region; the sequence is TRNAR. Zn(2+)-binding residues include Cys306, Cys308, Cys311, and His337.

The protein belongs to the queuine tRNA-ribosyltransferase family. As to quaternary structure, homodimer. Within each dimer, one monomer is responsible for RNA recognition and catalysis, while the other monomer binds to the replacement base PreQ1. Requires Zn(2+) as cofactor.

The enzyme catalyses 7-aminomethyl-7-carbaguanine + guanosine(34) in tRNA = 7-aminomethyl-7-carbaguanosine(34) in tRNA + guanine. It functions in the pathway tRNA modification; tRNA-queuosine biosynthesis. In terms of biological role, catalyzes the base-exchange of a guanine (G) residue with the queuine precursor 7-aminomethyl-7-deazaguanine (PreQ1) at position 34 (anticodon wobble position) in tRNAs with GU(N) anticodons (tRNA-Asp, -Asn, -His and -Tyr). Catalysis occurs through a double-displacement mechanism. The nucleophile active site attacks the C1' of nucleotide 34 to detach the guanine base from the RNA, forming a covalent enzyme-RNA intermediate. The proton acceptor active site deprotonates the incoming PreQ1, allowing a nucleophilic attack on the C1' of the ribose to form the product. After dissociation, two additional enzymatic reactions on the tRNA convert PreQ1 to queuine (Q), resulting in the hypermodified nucleoside queuosine (7-(((4,5-cis-dihydroxy-2-cyclopenten-1-yl)amino)methyl)-7-deazaguanosine). The sequence is that of Queuine tRNA-ribosyltransferase from Histophilus somni (strain 129Pt) (Haemophilus somnus).